A 418-amino-acid chain; its full sequence is Serine hydroxymethyltransferase (418 aa).

(6S)-5,6,7,8-tetrahydrofolate-binding positions include Leu120 and 124 to 126 (GHL). Lys229 bears the N6-(pyridoxal phosphate)lysine mark. 353–355 (SPF) serves as a coordination point for (6S)-5,6,7,8-tetrahydrofolate.

Belongs to the SHMT family. As to quaternary structure, homodimer. It depends on pyridoxal 5'-phosphate as a cofactor.

Its subcellular location is the cytoplasm. The catalysed reaction is (6R)-5,10-methylene-5,6,7,8-tetrahydrofolate + glycine + H2O = (6S)-5,6,7,8-tetrahydrofolate + L-serine. It functions in the pathway one-carbon metabolism; tetrahydrofolate interconversion. Its pathway is amino-acid biosynthesis; glycine biosynthesis; glycine from L-serine: step 1/1. In terms of biological role, catalyzes the reversible interconversion of serine and glycine with tetrahydrofolate (THF) serving as the one-carbon carrier. This reaction serves as the major source of one-carbon groups required for the biosynthesis of purines, thymidylate, methionine, and other important biomolecules. Also exhibits THF-independent aldolase activity toward beta-hydroxyamino acids, producing glycine and aldehydes, via a retro-aldol mechanism. In Psychrobacter sp. (strain PRwf-1), this protein is Serine hydroxymethyltransferase.